The chain runs to 793 residues: Facilitated trehalose transporter Tret1 (793 aa).

Residues 1–326 are Cytoplasmic-facing; sequence MNRKVGPVLE…LEVYRPTTNP (326 aa). Disordered regions lie at residues 99–148 and 213–235; these read EKAK…EHKS and RHISFKFDKEPSPSSSDEDFEPS. Low complexity predominate over residues 104 to 113; the sequence is KSSLKSSRVS. The span at 115–125 shows a compositional bias: acidic residues; sequence DQEDDRFDEDE. A compositionally biased stretch (basic and acidic residues) spans 213–223; that stretch reads RHISFKFDKEP. The chain crosses the membrane as a helical span at residues 327 to 347; sequence IYIWTQVLAALSVSLGSMVVG. Over 348–376 the chain is Extracellular; the sequence is FSSAYTSPALVSMKDRNITSFEVTDQSGS. N364 carries N-linked (GlcNAc...) asparagine glycosylation. A helical transmembrane segment spans residues 377-397; the sequence is WVGGIMPLAGLAGGILGGPMI. The Cytoplasmic segment spans residues 398 to 411; it reads EYLGRKNTILATAT. Residues 412–432 traverse the membrane as a helical segment; sequence PFIISWLLIGCATHVAMVLVG. The Extracellular segment spans residues 433-434; the sequence is RA. Residues 435-455 form a helical membrane-spanning segment; that stretch reads LSGLCVGIASLSLPVYLGETV. The Cytoplasmic segment spans residues 456 to 460; it reads QPEVR. A helical transmembrane segment spans residues 461-481; sequence GTLGLLPTAFGNIGILLCFVA. At 482–488 the chain is on the extracellular side; the sequence is GKYLDWS. Residues 489-509 form a helical membrane-spanning segment; it reads GLAFLGAALPIPFLLLMFLIP. Over 510-572 the chain is Cytoplasmic; the sequence is ETPRWYVSRN…DLLNKANLKP (63 aa). The helical transmembrane segment at 573-593 threads the bilayer; it reads LLISLGLMFFQQLSGINAVIF. Residues 594–609 lie on the Extracellular side of the membrane; sequence YTVQIFQSAGSTIDEK. The chain crosses the membrane as a helical span at residues 610-630; sequence LCTIIVGVVNFIATFIATVLI. Residues 631–636 lie on the Cytoplasmic side of the membrane; the sequence is DRLGRK. The chain crosses the membrane as a helical span at residues 637-657; the sequence is ILLYISDVAMIITLMTLGTFF. Topologically, residues 658–668 are extracellular; it reads YMKNNGDDVSE. The chain crosses the membrane as a helical span at residues 669 to 689; the sequence is IGWLPLAAFVVFVVGFSLGFG. At 690-703 the chain is on the cytoplasmic side; that stretch reads PIPWLMMGEILPGK. Residues 704 to 724 form a helical membrane-spanning segment; that stretch reads IRGSAASVATAFNWSCTFVVT. The Extracellular segment spans residues 725–737; sequence KTFADITASIGNH. A helical membrane pass occupies residues 738–758; it reads GAFWMFGSICIVGLLFVIVYV. Topologically, residues 759–793 are cytoplasmic; it reads PETQGKSLEDIERKMMGRVRRMSSVANIKPLSFNM.

The protein belongs to the major facilitator superfamily. Sugar transporter (TC 2.A.1.1) family. Trehalose transporter subfamily.

It localises to the cell membrane. Functionally, high-capacity facilitative transporter for trehalose. Does not transport maltose, sucrose or lactose. Mediates the bidirectional transfer of trehalose. Responsible for the transport of trehalose synthesized in the fat body and the incorporation of trehalose into other tissues that require a carbon source, thereby regulating trehalose levels in the hemolymph. This is Facilitated trehalose transporter Tret1 from Anopheles gambiae (African malaria mosquito).